The chain runs to 186 residues: UPF0461 protein C5orf24 homolog (186 aa).

Polar residues predominate over residues 60-69 (NETHLQTSTS). The disordered stretch occupies residues 60–140 (NETHLQTSTS…AAGYKVSPGR (81 aa)). The span at 78–92 (LKKKKNLGRSGKRGR) shows a compositional bias: basic residues. The span at 94–107 (SGTTKSAGYRTSTG) shows a compositional bias: polar residues.

It belongs to the UPF0461 family.

This Xenopus tropicalis (Western clawed frog) protein is UPF0461 protein C5orf24 homolog.